A 438-amino-acid polypeptide reads, in one-letter code: Serine--tRNA ligase (438 aa).

Residue 235–237 coordinates L-serine; the sequence is TAE. Residues 266–268 and V282 contribute to the ATP site; that span reads RKE. E289 is a binding site for L-serine. 355–358 provides a ligand contact to ATP; that stretch reads ELVS. Position 393 (T393) interacts with L-serine.

It belongs to the class-II aminoacyl-tRNA synthetase family. Type-1 seryl-tRNA synthetase subfamily. In terms of assembly, homodimer. The tRNA molecule binds across the dimer.

It carries out the reaction tRNA(Ser) + L-serine + ATP = L-seryl-tRNA(Ser) + AMP + diphosphate + H(+). The enzyme catalyses tRNA(Sec) + L-serine + ATP = L-seryl-tRNA(Sec) + AMP + diphosphate + H(+). The protein operates within aminoacyl-tRNA biosynthesis; selenocysteinyl-tRNA(Sec) biosynthesis; L-seryl-tRNA(Sec) from L-serine and tRNA(Sec): step 1/1. Catalyzes the attachment of serine to tRNA(Ser). Is also able to aminoacylate tRNA(Sec) with serine, to form the misacylated tRNA L-seryl-tRNA(Sec), which will be further converted into selenocysteinyl-tRNA(Sec). This is Serine--tRNA ligase from Helianthus annuus (Common sunflower).